A 499-amino-acid chain; its full sequence is E3 ubiquitin-protein ligase TRIM69 (499 aa).

The tract at residues 1-152 (MEVSSRPPSN…SMGQSKDFLQ (152 aa)) is necessary for nuclear localization. The RING-type zinc finger occupies 41 to 82 (CPLCNDWFRDPLMLTCGHNFCQACIQNYWKMQAKETFCPECK). Residues 160–265 (FTEELAIYQS…NIQARMEQQN (106 aa)) are a coiled coil. The B30.2/SPRY domain maps to 305–499 (PIQYTIWREM…KEPLHIVHPQ (195 aa)). Ser341 carries the post-translational modification Phosphoserine.

The protein belongs to the TRIM/RBCC family. In terms of assembly, homo-multimer; required for antiviral activity. Interacts with PML. Phosphorylated. Phosphorylation is necessary for nuclear localization.

Its subcellular location is the cytoplasm. The protein localises to the nucleus. The protein resides in the nucleus speckle. It localises to the cytoskeleton. It is found in the microtubule organizing center. Its subcellular location is the centrosome. It catalyses the reaction S-ubiquitinyl-[E2 ubiquitin-conjugating enzyme]-L-cysteine + [acceptor protein]-L-lysine = [E2 ubiquitin-conjugating enzyme]-L-cysteine + N(6)-ubiquitinyl-[acceptor protein]-L-lysine.. It functions in the pathway protein modification; protein ubiquitination. Functionally, E3 ubiquitin ligase that plays an important role in antiviral immunity by restricting different viral infections including dengue virus or vesicular stomatitis indiana virus. Ubiquitinates viral proteins such as dengue virus NS3 thereby limiting infection. In addition, acts as a key mediator of type I interferon induced microtubule stabilization by directly associating to microtubules independently of its E3 ligase activity. Also plays a role in cataract formation together with TP53. Mechanistically, inhibits UVB-induced cell apoptosis and reactive oxygen species (ROS) production by inducing TP53 ubiquitination. Regulates centrosome dynamics and mitotic progression by ubiquitinating STK3/MST2; leading to its redistribution to the perinuclear cytoskeleton and subsequent phosphorylation by PLK1. In Rattus norvegicus (Rat), this protein is E3 ubiquitin-protein ligase TRIM69 (Trim69).